We begin with the raw amino-acid sequence, 91 residues long: Small ribosomal subunit protein uS15 (91 aa).

The protein belongs to the universal ribosomal protein uS15 family. Part of the 30S ribosomal subunit. Forms a bridge to the 50S subunit in the 70S ribosome, contacting the 23S rRNA.

In terms of biological role, one of the primary rRNA binding proteins, it binds directly to 16S rRNA where it helps nucleate assembly of the platform of the 30S subunit by binding and bridging several RNA helices of the 16S rRNA. Its function is as follows. Forms an intersubunit bridge (bridge B4) with the 23S rRNA of the 50S subunit in the ribosome. This chain is Small ribosomal subunit protein uS15, found in Rickettsia bellii (strain OSU 85-389).